We begin with the raw amino-acid sequence, 190 residues long: Scytalone dehydratase-like protein Arp1 (190 aa).

Tyr-67 is a substrate binding site. Active-site residues include His-102 and His-127. Residue Asn-148 coordinates substrate.

Belongs to the scytalone dehydratase family. As to quaternary structure, homotrimer. Each subunit contains an active site, located in the central part of the hydrophobic core of the monomer, which functions independently.

Functionally, scytalone dehydratase-like protein; part of the Pks2 gene cluster that mediates the formation of infectious structures (appressoria), enabling these fungi to kill insects faster. The product of the Pks2 gene cluster is different from the one of Pks1 and has still not been identified. The polypeptide is Scytalone dehydratase-like protein Arp1 (Metarhizium anisopliae (strain ARSEF 549)).